The chain runs to 267 residues: MNTIEKRLNMDPIAIKLGPLEIRWYAICILLGLILGVYLATKEGPRKKIRQDDILDFILIAFPLSILGARIYYVAFSWSEYKDNILSIFAIWNGGIAIYGGLITGAIVLYFFTQYRFINTLDFLDIVAPSVMIAQAIGRWGNFFNQEAYGKAVESLNYLPAFIRDQMYIDGAYRQPTFLFESLWNLLGFGLVCVLRRRPKFLKQGEITAFYLVWYGCGRLLIEGLRTDSLMFLGIRVSQWLSGVLILVGIIMVVLRRRKSSIPFYQP.

The next 4 helical transmembrane spans lie at 20–40 (LEIR…VYLA), 57–77 (FILI…VAFS), 88–108 (IFAI…GAIV), and 117–137 (FINT…AQAI). R139 is a binding site for a 1,2-diacyl-sn-glycero-3-phospho-(1'-sn-glycerol). Helical transmembrane passes span 175–195 (QPTF…VCVL), 205–225 (GEIT…IEGL), and 235–255 (IRVS…MVVL).

The protein belongs to the Lgt family.

It localises to the cell membrane. It carries out the reaction L-cysteinyl-[prolipoprotein] + a 1,2-diacyl-sn-glycero-3-phospho-(1'-sn-glycerol) = an S-1,2-diacyl-sn-glyceryl-L-cysteinyl-[prolipoprotein] + sn-glycerol 1-phosphate + H(+). It functions in the pathway protein modification; lipoprotein biosynthesis (diacylglyceryl transfer). In terms of biological role, catalyzes the transfer of the diacylglyceryl group from phosphatidylglycerol to the sulfhydryl group of the N-terminal cysteine of a prolipoprotein, the first step in the formation of mature lipoproteins. In Streptococcus suis (strain 98HAH33), this protein is Phosphatidylglycerol--prolipoprotein diacylglyceryl transferase.